Consider the following 425-residue polypeptide: Glutamate-1-semialdehyde 2,1-aminomutase (425 aa).

Lys265 bears the N6-(pyridoxal phosphate)lysine mark.

It belongs to the class-III pyridoxal-phosphate-dependent aminotransferase family. HemL subfamily. In terms of assembly, homodimer. Requires pyridoxal 5'-phosphate as cofactor.

Its subcellular location is the cytoplasm. The catalysed reaction is (S)-4-amino-5-oxopentanoate = 5-aminolevulinate. The protein operates within porphyrin-containing compound metabolism; protoporphyrin-IX biosynthesis; 5-aminolevulinate from L-glutamyl-tRNA(Glu): step 2/2. The polypeptide is Glutamate-1-semialdehyde 2,1-aminomutase (Clostridium perfringens (strain 13 / Type A)).